The chain runs to 61 residues: Defensin BmKDfsin1 (61 aa).

An N-terminal signal peptide occupies residues 1–25; the sequence is MKTIVLLFVLVLVFALLVKMGMVEA. Disulfide bonds link cysteine 29-cysteine 50, cysteine 36-cysteine 58, and cysteine 40-cysteine 60.

Belongs to the invertebrate defensin family. Type 2 subfamily. As to expression, highly expressed in non-venom gland (hemolymph) and moderately expressed in venom gland.

It localises to the secreted. Functionally, antibacterial peptide active against Gram-positive bacteria, but not on Gram-negative bacteria. Also has weak blocking activity on Kv1.1/KCNA1, Kv1.2/KCNA2, Kv1.3/KCNA3, KCa3.1/KCNN4/IK, KCa2.3/KCNN3/SK3 and Kv11.1/KCNH2/ERG1 channels (tested at 1 uM). It inhibits potassium channel current by interacting with the pore region. The chain is Defensin BmKDfsin1 from Olivierus martensii (Manchurian scorpion).